The sequence spans 820 residues: Disintegrin and metalloproteinase domain-containing protein 29 (820 aa).

The signal sequence occupies residues 1–18; it reads MKMLLLLHCLGVFLSCSG. A propeptide spanning residues 19–193 is cleaved from the precursor; that stretch reads HIQDEHPQYH…TQKQSSYVGW (175 aa). The Extracellular segment spans residues 194 to 674; that stretch reads WIHFRIVEIV…GPPPKRKKKK (481 aa). In terms of domain architecture, Peptidase M12B spans 198–390; it reads RIVEIVVVID…RTKCLLETVH (193 aa). N-linked (GlcNAc...) asparagine glycosylation is found at Asn-217 and Asn-320. 3 cysteine pairs are disulfide-bonded: Cys-307-Cys-384, Cys-347-Cys-369, and Cys-349-Cys-354. N-linked (GlcNAc...) asparagine glycans are attached at residues Asn-368, Asn-428, Asn-469, Asn-538, Asn-545, Asn-558, and Asn-564. Residues 397–483 enclose the Disintegrin domain; sequence VKRCGNGVVE…KCPDDFYVED (87 aa). A disulfide bridge links Cys-455 with Cys-475. Cystine bridges form between Cys-625-Cys-636, Cys-630-Cys-642, and Cys-644-Cys-653. The EGF-like domain maps to 625–654; the sequence is CSPAFCNKRGICNNKHHCHCNYLWDPPNCL. A helical transmembrane segment spans residues 675 to 695; that stretch reads KFCYLCILLLIVLFILLCCLY. Over 696-820 the chain is Cytoplasmic; that stretch reads RLCKKSKPIK…SQSQPPVTPS (125 aa). Residues 706-820 are disordered; it reads KQQDVQTPSA…SQSQPPVTPS (115 aa). Positions 715-727 are enriched in basic and acidic residues; it reads AKEEEKIQRRPHE. Over residues 738 to 820 the composition is skewed to low complexity; that stretch reads PSQSQPPVTP…SQSQPPVTPS (83 aa). A run of 9 repeats spans residues 739-747, 748-756, 757-765, 766-774, 775-783, 784-792, 793-801, 802-810, and 811-819. Residues 739–819 form a 9 X 9 AA approximate repeats region; the sequence is SQSQPPVTPS…PSQSQPPVTP (81 aa).

In terms of tissue distribution, expressed specifically in testes.

Its subcellular location is the membrane. In terms of biological role, may be involved in spermatogenesis and fertilization. Seems to be a non catalytic metalloprotease-like protein. This is Disintegrin and metalloproteinase domain-containing protein 29 (ADAM29) from Homo sapiens (Human).